We begin with the raw amino-acid sequence, 183 residues long: Protein jagunal homolog 1 (183 aa).

Over 1-39 (MASRAGPRAAGTDGSDFQHRERVAMHYQMSVTLKYEIKK) the chain is Cytoplasmic. Phosphoserine is present on Ser3. Residues 40–60 (LIYVHLVIWLLLVAKMSVGHL) traverse the membrane as a helical segment. Over 61 to 71 (RLLSHDQVAMP) the chain is Lumenal. A helical membrane pass occupies residues 72–92 (YQWEYPYLLSVVPSLLGLLSF). At 93–96 (PRNN) the chain is on the cytoplasmic side. A helical membrane pass occupies residues 97–117 (ISYLVLSMISMGLFSIAPLIY). Over 118 to 137 (GSMEMFPAAQQLYRHGKAYR) the chain is Lumenal. Residues 138–158 (FLFGFSAVSVMYLVLVLAVQV) traverse the membrane as a helical segment. At 159–183 (HAWQLYYSKKLLDSWFTSTQEKKRK) the chain is on the cytoplasmic side.

It belongs to the jagunal family. Interacts with COPA, COPB2 and COPG2.

It is found in the endoplasmic reticulum membrane. Endoplasmic reticulum transmembrane protein involved in vesicle-mediated transport, which is required for neutrophil function. Required for vesicle-mediated transport; it is however unclear whether it is involved in early secretory pathway or intracellular protein transport. Acts as a regulator of neutrophil function, probably via its role in vesicle-mediated transport: required for defense against fungal pathogens and for granulocyte colony-stimulating factor (GM-CSF) signaling pathway; possibly by regulating glycosylation and/or targeting of proteins contributing to the viability and migration of neutrophils. In Bos taurus (Bovine), this protein is Protein jagunal homolog 1 (JAGN1).